The primary structure comprises 561 residues: MARRGSCSTICLNEKLQRFRIVRISDKADNFNSRSGSFFERSISLVLLLWCFLFLVYSKLGQSHDDYGNADRIGNYTDGSVSKTLNSTSSVFPQATEKENNFCLLRKGQLQDVYEHVLVNNALLICKVVLPERRISKKTLEARDPRYVNLEDKSLKVNGSSQLVNNGTRYRLEPDGNGYNYASAMKGAKVVDHNKEAKGASNVLGKDHDKYLRNPCSVSDKYVVIELAEETLVDTVRIANFEHYSSNPKEFSLSGSLSFPSDMWTPAGSFAAANVKQIQSFRLPEPKWLRYLKLNLVSHYGSEFYCTLSVVEVFGIDALEQMLEDLFVPSETPPSKPAMVELKTADEKQDGEIKSNRTDQIGKETEAQKKKDDVVKTINIIGDKKYEVKEKHNVLKVMMQKVKLIEMNLSLLEDSVKKMNDKQPEVSLEMKKTLVLVEKSKADIREITEWKGKMEKELRDLELWKTLVASRVESLARGNSALRLDVEKIVKEQANLESKELGVLLISLFFVVLATIRLVSTRLWAFLGMSITDKARSLWPDSGWVMILLSSSIMIFIHLLS.

Residues 36–56 (GSFFERSISLVLLLWCFLFLV) form a helical membrane-spanning segment. The SUN domain maps to 158–318 (NGSSQLVNNG…SVVEVFGIDA (161 aa)). The tract at residues 345-367 (ADEKQDGEIKSNRTDQIGKETEA) is disordered. The stretch at 454-499 (MEKELRDLELWKTLVASRVESLARGNSALRLDVEKIVKEQANLESK) forms a coiled coil. Transmembrane regions (helical) follow at residues 501-521 (LGVL…LVST) and 540-560 (PDSG…IHLL).

In terms of assembly, forms homomers. Interacts with SUN3 and TIK.

Its subcellular location is the membrane. In terms of biological role, encodes a member of the mid-SUN subfamily of SUN-domain proteins. It is involved in early seed development and nuclear morphology. [TAIR]. The chain is SUN domain-containing protein 5 from Arabidopsis thaliana (Mouse-ear cress).